The primary structure comprises 338 residues: Ketol-acid reductoisomerase (NADP(+)) (338 aa).

The KARI N-terminal Rossmann domain occupies 1 to 181 (MKVFYDKDAD…GGGRAGIIET (181 aa)). NADP(+) is bound by residues 24-27 (YGSQ), Arg-47, and Ser-52. His-107 is a catalytic residue. Gly-133 provides a ligand contact to NADP(+). The 146-residue stretch at 182–327 (NFREETETDL…GKLRAMMPWI (146 aa)) folds into the KARI C-terminal knotted domain. Mg(2+)-binding residues include Asp-190, Glu-194, Glu-226, and Glu-230. Ser-251 is a substrate binding site.

It belongs to the ketol-acid reductoisomerase family. It depends on Mg(2+) as a cofactor.

The catalysed reaction is (2R)-2,3-dihydroxy-3-methylbutanoate + NADP(+) = (2S)-2-acetolactate + NADPH + H(+). The enzyme catalyses (2R,3R)-2,3-dihydroxy-3-methylpentanoate + NADP(+) = (S)-2-ethyl-2-hydroxy-3-oxobutanoate + NADPH + H(+). It participates in amino-acid biosynthesis; L-isoleucine biosynthesis; L-isoleucine from 2-oxobutanoate: step 2/4. The protein operates within amino-acid biosynthesis; L-valine biosynthesis; L-valine from pyruvate: step 2/4. Involved in the biosynthesis of branched-chain amino acids (BCAA). Catalyzes an alkyl-migration followed by a ketol-acid reduction of (S)-2-acetolactate (S2AL) to yield (R)-2,3-dihydroxy-isovalerate. In the isomerase reaction, S2AL is rearranged via a Mg-dependent methyl migration to produce 3-hydroxy-3-methyl-2-ketobutyrate (HMKB). In the reductase reaction, this 2-ketoacid undergoes a metal-dependent reduction by NADPH to yield (R)-2,3-dihydroxy-isovalerate. The protein is Ketol-acid reductoisomerase (NADP(+)) of Cupriavidus metallidurans (strain ATCC 43123 / DSM 2839 / NBRC 102507 / CH34) (Ralstonia metallidurans).